The chain runs to 249 residues: Zinc finger protein CG30 (249 aa).

The segment at 8 to 66 (CHICCSVGEIKNYFLQPVDAITILPIVELHTCRHQLCVMCVRKIAQRGRDKRVECPMCR) adopts an RING-type zinc-finger fold.

The sequence is that of Zinc finger protein CG30 (CG30) from Orgyia pseudotsugata (Douglas-fir tussock moth).